The primary structure comprises 412 residues: Putative competence-damage inducible protein (412 aa).

This sequence belongs to the CinA family.

This chain is Putative competence-damage inducible protein, found in Bacillus thuringiensis (strain Al Hakam).